Consider the following 242-residue polypeptide: Ubiquinone biosynthesis O-methyltransferase (242 aa).

S-adenosyl-L-methionine is bound by residues Arg-44, Gly-64, Asp-85, and Met-129.

Belongs to the methyltransferase superfamily. UbiG/COQ3 family.

The catalysed reaction is a 3-demethylubiquinol + S-adenosyl-L-methionine = a ubiquinol + S-adenosyl-L-homocysteine + H(+). It catalyses the reaction a 3-(all-trans-polyprenyl)benzene-1,2-diol + S-adenosyl-L-methionine = a 2-methoxy-6-(all-trans-polyprenyl)phenol + S-adenosyl-L-homocysteine + H(+). It participates in cofactor biosynthesis; ubiquinone biosynthesis. Its function is as follows. O-methyltransferase that catalyzes the 2 O-methylation steps in the ubiquinone biosynthetic pathway. This is Ubiquinone biosynthesis O-methyltransferase from Salmonella typhi.